Here is a 222-residue protein sequence, read N- to C-terminus: Pre-mRNA cleavage factor Im 25 kDa subunit 1 (222 aa).

The Nudix hydrolase domain maps to 67 to 194 (GLRTCVEAVL…KLLAVPLCQL (128 aa)). The interaction with RNA stretch occupies residues 94–96 (SIF). Residues 101–122 (GRLRPGESDIEGLKRKLASKLS) carry the Nudix box motif.

The protein belongs to the Nudix hydrolase family. CPSF5 subfamily. Homodimer. Component of the cleavage factor Im (CFIm) complex. Forms a complex with cleavage and polyadenylation specificity factor (CPSF) subunits FIPS5.

It is found in the nucleus. In terms of biological role, component of the cleavage factor Im (CFIm) complex that plays a key role in pre-mRNA 3'-processing. Involved in association with CPSF6 or CPSF7 in pre-MRNA 3'-end poly(A) site cleavage and poly(A) addition. NUDT21/CPSF5 binds to cleavage and polyadenylation RNA substrates. The homodimer mediates simultaneous sequence-specific recognition of two 5'-UGUA-3' elements within the pre-mRNA. Binds to, but does not hydrolyze mono- and di-adenosine nucleotides. May have a role in mRNA export. The protein is Pre-mRNA cleavage factor Im 25 kDa subunit 1 of Arabidopsis thaliana (Mouse-ear cress).